Consider the following 637-residue polypeptide: tRNA uridine 5-carboxymethylaminomethyl modification enzyme MnmG (637 aa).

14–19 serves as a coordination point for FAD; that stretch reads GAGHAG. Residue 279-293 participates in NAD(+) binding; sequence GPRYCPSIEDKVVRF.

Belongs to the MnmG family. In terms of assembly, homodimer. Heterotetramer of two MnmE and two MnmG subunits. FAD is required as a cofactor.

The protein localises to the cytoplasm. NAD-binding protein involved in the addition of a carboxymethylaminomethyl (cmnm) group at the wobble position (U34) of certain tRNAs, forming tRNA-cmnm(5)s(2)U34. The chain is tRNA uridine 5-carboxymethylaminomethyl modification enzyme MnmG from Desulfitobacterium hafniense (strain DSM 10664 / DCB-2).